The following is a 396-amino-acid chain: Tryptophan synthase beta chain 1 (396 aa).

Position 86 is an N6-(pyridoxal phosphate)lysine (Lys86).

Belongs to the TrpB family. Tetramer of two alpha and two beta chains. Pyridoxal 5'-phosphate is required as a cofactor.

The catalysed reaction is (1S,2R)-1-C-(indol-3-yl)glycerol 3-phosphate + L-serine = D-glyceraldehyde 3-phosphate + L-tryptophan + H2O. Its pathway is amino-acid biosynthesis; L-tryptophan biosynthesis; L-tryptophan from chorismate: step 5/5. The beta subunit is responsible for the synthesis of L-tryptophan from indole and L-serine. The protein is Tryptophan synthase beta chain 1 (trpB1) of Vibrio parahaemolyticus serotype O3:K6 (strain RIMD 2210633).